The sequence spans 297 residues: Protoheme IX farnesyltransferase (297 aa).

Transmembrane regions (helical) follow at residues 23–43 (VTQL…PGMP), 49–69 (VFGT…NCLI), 93–113 (IQVL…LYHL), 117–137 (LTMW…TVIL), 144–164 (NIVI…AAVA), 171–191 (AWVL…ALAL), 215–235 (RLHI…PYAI), 238–258 (SGAL…WYAW), and 275–295 (FSIL…WVGL).

This sequence belongs to the UbiA prenyltransferase family. Protoheme IX farnesyltransferase subfamily.

It is found in the cell inner membrane. The enzyme catalyses heme b + (2E,6E)-farnesyl diphosphate + H2O = Fe(II)-heme o + diphosphate. It functions in the pathway porphyrin-containing compound metabolism; heme O biosynthesis; heme O from protoheme: step 1/1. Its function is as follows. Converts heme B (protoheme IX) to heme O by substitution of the vinyl group on carbon 2 of heme B porphyrin ring with a hydroxyethyl farnesyl side group. The sequence is that of Protoheme IX farnesyltransferase from Bordetella pertussis (strain Tohama I / ATCC BAA-589 / NCTC 13251).